Here is a 414-residue protein sequence, read N- to C-terminus: tRNA (guanine-N(7)-)-methyltransferase non-catalytic subunit WDR4 (414 aa).

The residue at position 2 (Ala2) is an N-acetylalanine. WD repeat units follow at residues 60–99, 101–140, 144–184, and 187–227; these read QGSD…CLSV, TVVR…GGGR, GHLS…IESF, and GHTE…ELHC. Residues 377-414 are disordered; that stretch reads EERLQQQLEKKRRQAPPPGPNGPTKKMRAGELAQGCSS.

The protein belongs to the WD repeat TRM82 family. Non-catalytic component of the METTL1-WDR4 complex, composed of METTL1 and WDR4. Interacts with FEN1; the interaction is direct.

Its subcellular location is the nucleus. It localises to the chromosome. Its pathway is tRNA modification; N(7)-methylguanine-tRNA biosynthesis. Non-catalytic component of the METTL1-WDR4 methyltransferase complex required for the formation of N(7)-methylguanine in a subset of RNA species, such as tRNAs, mRNAs and microRNAs (miRNAs). In the METTL1-WDR4 methyltransferase complex, WDR4 acts as a scaffold for tRNA-binding. Required for the formation of N(7)-methylguanine at position 46 (m7G46) in a large subset of tRNAs that contain the 5'-RAGGU-3' motif within the variable loop. M7G46 interacts with C13-G22 in the D-loop to stabilize tRNA tertiary structure and protect tRNAs from decay. Also required for the formation of N(7)-methylguanine at internal sites in a subset of mRNAs. Also required for methylation of a specific subset of miRNAs, such as let-7. Independently of METTL1, also plays a role in genome stability: localizes at the DNA replication site and regulates endonucleolytic activities of FEN1. The sequence is that of tRNA (guanine-N(7)-)-methyltransferase non-catalytic subunit WDR4 from Bos taurus (Bovine).